The primary structure comprises 422 residues: Chorismate synthase (422 aa).

The NADP(+) site is built by arginine 43 and arginine 49. FMN contacts are provided by residues 143 to 145 (RSS), 264 to 265 (QA), glycine 309, 324 to 328 (KPIST), and arginine 350.

Belongs to the chorismate synthase family. In terms of assembly, homotetramer. The cofactor is FMNH2.

The enzyme catalyses 5-O-(1-carboxyvinyl)-3-phosphoshikimate = chorismate + phosphate. It participates in metabolic intermediate biosynthesis; chorismate biosynthesis; chorismate from D-erythrose 4-phosphate and phosphoenolpyruvate: step 7/7. In terms of biological role, catalyzes the anti-1,4-elimination of the C-3 phosphate and the C-6 proR hydrogen from 5-enolpyruvylshikimate-3-phosphate (EPSP) to yield chorismate, which is the branch point compound that serves as the starting substrate for the three terminal pathways of aromatic amino acid biosynthesis. This reaction introduces a second double bond into the aromatic ring system. This chain is Chorismate synthase, found in Corynebacterium jeikeium (strain K411).